Here is a 65-residue protein sequence, read N- to C-terminus: MARYRHSRSRSRSGYRRQRRRRSRYRSRRRRYRRRQRRSRRGRRRGYSRRRYSRRRYSRRRRRRY.

The disordered stretch occupies residues 1-65 (MARYRHSRSR…RYSRRRRRRY (65 aa)).

Belongs to the protamine P1 family. As to expression, testis.

It localises to the nucleus. Its subcellular location is the chromosome. Its function is as follows. Protamines substitute for histones in the chromatin of sperm during the haploid phase of spermatogenesis. They compact sperm DNA into a highly condensed, stable and inactive complex. This chain is Sperm protamine P1 (PRM1), found in Lagorchestes hirsutus (Rufous hare-wallaby).